The sequence spans 114 residues: Putative antiporter subunit mnhC2 (114 aa).

A run of 3 helical transmembrane segments spans residues 3-23 (LILL…ILSI), 25-45 (LIRI…IIMS), and 72-92 (AIVL…LVLI).

It belongs to the CPA3 antiporters (TC 2.A.63) subunit C family. May form a heterooligomeric complex that consists of seven subunits: mnhA2, mnhB2, mnhC2, mnhD2, mnhE2, mnhF2 and mnhG2.

The protein localises to the cell membrane. This Staphylococcus epidermidis (strain ATCC 12228 / FDA PCI 1200) protein is Putative antiporter subunit mnhC2 (mnhC2).